The chain runs to 635 residues: Threonine--tRNA ligase (635 aa).

The TGS domain maps to 1–61 (MVSIRLPDGS…DHDVALAIVT (61 aa)). Positions 242–533 (DHRKLGKQLD…LIEHHAGAMP (292 aa)) are catalytic. Zn(2+) is bound by residues cysteine 333, histidine 384, and histidine 510.

The protein belongs to the class-II aminoacyl-tRNA synthetase family. As to quaternary structure, homodimer. The cofactor is Zn(2+).

Its subcellular location is the cytoplasm. It carries out the reaction tRNA(Thr) + L-threonine + ATP = L-threonyl-tRNA(Thr) + AMP + diphosphate + H(+). In terms of biological role, catalyzes the attachment of threonine to tRNA(Thr) in a two-step reaction: L-threonine is first activated by ATP to form Thr-AMP and then transferred to the acceptor end of tRNA(Thr). Also edits incorrectly charged L-seryl-tRNA(Thr). The polypeptide is Threonine--tRNA ligase (Paraburkholderia xenovorans (strain LB400)).